We begin with the raw amino-acid sequence, 358 residues long: Peptide chain release factor 2 (358 aa).

Glutamine 242 carries the post-translational modification N5-methylglutamine.

Belongs to the prokaryotic/mitochondrial release factor family. Methylated by PrmC. Methylation increases the termination efficiency of RF2.

The protein localises to the cytoplasm. Its function is as follows. Peptide chain release factor 2 directs the termination of translation in response to the peptide chain termination codons UGA and UAA. The protein is Peptide chain release factor 2 (prfB) of Borreliella burgdorferi (strain ATCC 35210 / DSM 4680 / CIP 102532 / B31) (Borrelia burgdorferi).